A 90-amino-acid polypeptide reads, in one-letter code: Small ribosomal subunit protein bS18 (90 aa).

Belongs to the bacterial ribosomal protein bS18 family. In terms of assembly, part of the 30S ribosomal subunit. Forms a tight heterodimer with protein bS6.

Its function is as follows. Binds as a heterodimer with protein bS6 to the central domain of the 16S rRNA, where it helps stabilize the platform of the 30S subunit. The sequence is that of Small ribosomal subunit protein bS18 from Bordetella petrii (strain ATCC BAA-461 / DSM 12804 / CCUG 43448).